The following is a 124-amino-acid chain: Fluoride-specific ion channel FluC 2 (124 aa).

The next 4 membrane-spanning stretches (helical) occupy residues 1 to 21 (MSDILFVSIGAILGANIRFQI), 34 to 54 (FLILIINTFASFGLGLFLSLV), 66 to 86 (LILFFSIGFFGSLSTFSSFVY), and 103 to 123 (LFIISVSIGIIAFAFGLFLGT). Na(+)-binding residues include Gly76 and Ser79.

The protein belongs to the fluoride channel Fluc/FEX (TC 1.A.43) family.

Its subcellular location is the cell inner membrane. It carries out the reaction fluoride(in) = fluoride(out). With respect to regulation, na(+) is not transported, but it plays an essential structural role and its presence is essential for fluoride channel function. Fluoride-specific ion channel. Important for reducing fluoride concentration in the cell, thus reducing its toxicity. In Prochlorococcus marinus (strain NATL2A), this protein is Fluoride-specific ion channel FluC 2.